Reading from the N-terminus, the 94-residue chain is Integration host factor subunit beta (94 aa).

This sequence belongs to the bacterial histone-like protein family. As to quaternary structure, heterodimer of an alpha and a beta chain.

This protein is one of the two subunits of integration host factor, a specific DNA-binding protein that functions in genetic recombination as well as in transcriptional and translational control. This is Integration host factor subunit beta from Caulobacter sp. (strain K31).